Consider the following 515-residue polypeptide: uncharacterized protein (515 aa).

A run of 3 helical transmembrane segments spans residues 1-21, 165-185, and 199-219; these read MSFV…LAGI, IGGP…GLLF, and GPVG…GLFG. The region spanning 1-93 is the PE domain; the sequence is MSFVVAAPEV…AGAYAGAEAA (93 aa). Positions 349–360 are enriched in gly residues; it reads GGTLIGNGGDGG. Disordered stretches follow at residues 349–368 and 463–515; these read GGTL…TDGF and GVSG…SPGG.

The protein belongs to the mycobacterial PE family. PGRS subfamily.

Its subcellular location is the cell membrane. This is an uncharacterized protein from Mycobacterium tuberculosis (strain CDC 1551 / Oshkosh).